Reading from the N-terminus, the 412-residue chain is DNA replication and repair protein RecF (412 aa).

30 to 37 is a binding site for ATP; it reads GKNGLGKT.

This sequence belongs to the RecF family.

It localises to the cytoplasm. Its function is as follows. The RecF protein is involved in DNA metabolism; it is required for DNA replication and normal SOS inducibility. RecF binds preferentially to single-stranded, linear DNA. It also seems to bind ATP. This Bifidobacterium longum subsp. infantis (strain ATCC 15697 / DSM 20088 / JCM 1222 / NCTC 11817 / S12) protein is DNA replication and repair protein RecF.